Consider the following 655-residue polypeptide: p-hydroxybenzoic acid efflux pump subunit AaeB (655 aa).

Over 1 to 12 the chain is Periplasmic; it reads MGIFSIANQHIR. The chain crosses the membrane as a helical span at residues 13-33; the sequence is FAVKLACAIVLALFIGFHFQL. The Cytoplasmic segment spans residues 34-37; it reads ETPR. The chain crosses the membrane as a helical span at residues 38 to 58; it reads WAVLTAAIVAAGPAFAAGGEP. Residues 59–68 are Periplasmic-facing; the sequence is YSGAIRYRGM. A helical membrane pass occupies residues 69-89; the sequence is LRIIGTFIGCIAALIIIISMI. Topologically, residues 90–92 are cytoplasmic; sequence RAP. The chain crosses the membrane as a helical span at residues 93 to 113; the sequence is LLMILVCCVWVGFCTWISSLV. Over 114 to 120 the chain is Periplasmic; sequence RIENSYA. A helical transmembrane segment spans residues 121-141; sequence WGLSGYTALIIVITIQTEPLL. At 142 to 151 the chain is on the cytoplasmic side; sequence TPQFALERCS. The helical transmembrane segment at 152–172 threads the bilayer; sequence EIVIGIGCAILADLLFSPRSI. The Periplasmic segment spans residues 173–369; it reads KQEVDRELDS…RTTLSCILGT (197 aa). The helical transmembrane segment at 370 to 390 threads the bilayer; sequence LFWLWTGWTSGNGEMVMIAVV. Topologically, residues 391-406 are cytoplasmic; sequence TSLAMRLPNPRMVCID. The helical transmembrane segment at 407–427 threads the bilayer; sequence FIYGTLAALPLGLLYFLVIIP. Residues 428–430 are Periplasmic-facing; sequence NTQ. The chain crosses the membrane as a helical span at residues 431–451; that stretch reads QSMLLLCLSLAVLGFFIGIEV. Over 452–458 the chain is Cytoplasmic; that stretch reads QKRRLGS. Residues 459–479 form a helical membrane-spanning segment; it reads MGALASTINIIVLDNPMTFHF. At 480 to 481 the chain is on the periplasmic side; that stretch reads SQ. The helical transmembrane segment at 482–502 threads the bilayer; that stretch reads FLDSALGQIVGCMLAFIVILL. Over 503 to 655 the chain is Cytoplasmic; it reads VRDKSKDRTG…HKYQNALTDS (153 aa).

The protein belongs to the aromatic acid exporter ArAE (TC 2.A.85) family.

It is found in the cell inner membrane. In terms of biological role, forms an efflux pump with AaeA. Could function as a metabolic relief valve, allowing to eliminate certain compounds when they accumulate to high levels in the cell. This is p-hydroxybenzoic acid efflux pump subunit AaeB from Salmonella paratyphi A (strain ATCC 9150 / SARB42).